The following is a 464-amino-acid chain: Glutamate decarboxylase beta (464 aa).

K275 carries the N6-(pyridoxal phosphate)lysine modification.

Belongs to the group II decarboxylase family. Pyridoxal 5'-phosphate is required as a cofactor.

It catalyses the reaction L-glutamate + H(+) = 4-aminobutanoate + CO2. Functionally, converts internalized glutamate to GABA and increases the internal pH. Involved in glutamate-dependent acid resistance in gastric fluid. This Listeria monocytogenes serovar 1/2a (strain ATCC BAA-679 / EGD-e) protein is Glutamate decarboxylase beta (gadB).